A 105-amino-acid polypeptide reads, in one-letter code: Heat shock protein HspQ (105 aa).

The protein belongs to the HspQ family.

It localises to the cytoplasm. Involved in the degradation of certain denaturated proteins, including DnaA, during heat shock stress. The chain is Heat shock protein HspQ from Sodalis glossinidius (strain morsitans).